Reading from the N-terminus, the 369-residue chain is Glutamate 5-kinase (369 aa).

K8 provides a ligand contact to ATP. Substrate contacts are provided by S49, D136, and N148. ATP-binding positions include 168–169 (TD) and 211–217 (TGGMATK). Positions 276–354 (KGELWLDEGA…TELANILGYA (79 aa)) constitute a PUA domain.

The protein belongs to the glutamate 5-kinase family.

Its subcellular location is the cytoplasm. It carries out the reaction L-glutamate + ATP = L-glutamyl 5-phosphate + ADP. It participates in amino-acid biosynthesis; L-proline biosynthesis; L-glutamate 5-semialdehyde from L-glutamate: step 1/2. Catalyzes the transfer of a phosphate group to glutamate to form L-glutamate 5-phosphate. The chain is Glutamate 5-kinase from Thermosynechococcus vestitus (strain NIES-2133 / IAM M-273 / BP-1).